The following is a 264-amino-acid chain: B3-hordein (264 aa).

The segment covering glutamine 1–glutamine 15 has biased composition (low complexity). The interval glutamine 1–phenylalanine 66 is disordered. Composition is skewed to pro residues over residues proline 16 to glutamine 44 and glutamine 52 to proline 64.

It belongs to the gliadin/glutenin family. In terms of tissue distribution, developing endosperm.

Its function is as follows. Sulfur-rich seed storage protein. The protein is B3-hordein of Hordeum vulgare (Barley).